Consider the following 858-residue polypeptide: Bifunctional uridylyltransferase/uridylyl-removing enzyme (858 aa).

Residues 1 to 324 (MSAHAAPSPE…PATSGITRVL (324 aa)) are uridylyltransferase. The tract at residues 325–681 (SADRFVEKQG…ARPSPIGDAL (357 aa)) is uridylyl-removing. The region spanning 443-565 (VDQHILMVLR…VGNERYLTAL (123 aa)) is the HD domain. 2 consecutive ACT domains span residues 682–763 (QVLV…PSKG) and 790–858 (ILSV…AIAV).

It belongs to the GlnD family. Requires Mg(2+) as cofactor.

The catalysed reaction is [protein-PII]-L-tyrosine + UTP = [protein-PII]-uridylyl-L-tyrosine + diphosphate. The enzyme catalyses [protein-PII]-uridylyl-L-tyrosine + H2O = [protein-PII]-L-tyrosine + UMP + H(+). Its activity is regulated as follows. Uridylyltransferase (UTase) activity is inhibited by glutamine, while glutamine activates uridylyl-removing (UR) activity. Functionally, modifies, by uridylylation and deuridylylation, the PII regulatory proteins (GlnB and homologs), in response to the nitrogen status of the cell that GlnD senses through the glutamine level. Under low glutamine levels, catalyzes the conversion of the PII proteins and UTP to PII-UMP and PPi, while under higher glutamine levels, GlnD hydrolyzes PII-UMP to PII and UMP (deuridylylation). Thus, controls uridylylation state and activity of the PII proteins, and plays an important role in the regulation of nitrogen assimilation and metabolism. This Burkholderia orbicola (strain AU 1054) protein is Bifunctional uridylyltransferase/uridylyl-removing enzyme.